The following is a 697-amino-acid chain: Potassium-transporting ATPase ATP-binding subunit (697 aa).

A run of 4 helical transmembrane segments spans residues 55–75, 82–102, 245–265, and 271–291; these read PIMFVVEIGFIITFILSFLPS, GWFNITVSFILLFTVLFANFA, LTFIFLIVVVTLPIFTNYLGF, and VLVALLVCLIPTTIGGLLSAI. The active-site 4-aspartylphosphate intermediate is the D324. ATP-binding positions include D361, E365, 393–400, and K412; that span reads FKAETRMS. Residues D535 and D539 each coordinate Mg(2+). Helical transmembrane passes span 605 to 625, 633 to 653, and 677 to 697; these read FAIIPAMFTLAIPQMEALNIM, AILSALLFNAVIIPLLIPLAM, and GGVIVPFIGIKVIDMIVGLFI.

The protein belongs to the cation transport ATPase (P-type) (TC 3.A.3) family. Type IA subfamily. In terms of assembly, the system is composed of three essential subunits: KdpA, KdpB and KdpC.

The protein localises to the cell membrane. It carries out the reaction K(+)(out) + ATP + H2O = K(+)(in) + ADP + phosphate + H(+). Functionally, part of the high-affinity ATP-driven potassium transport (or Kdp) system, which catalyzes the hydrolysis of ATP coupled with the electrogenic transport of potassium into the cytoplasm. This subunit is responsible for energy coupling to the transport system and for the release of the potassium ions to the cytoplasm. The chain is Potassium-transporting ATPase ATP-binding subunit from Bacillus cereus (strain AH187).